A 1250-amino-acid chain; its full sequence is Phospholipid-transporting ATPase IC (1250 aa).

Acidic residues-rich tracts occupy residues Met1 to Ser13 and Ser24 to Pro40. The tract at residues Met1–Ser52 is disordered. Residues Met1–Gln133 lie on the Cytoplasmic side of the membrane. The helical transmembrane segment at Ile134–Ala154 threads the bilayer. At Ile155 to Met338 the chain is on the exoplasmic loop side. A helical transmembrane segment spans residues Val339–Phe359. Over Trp360–Gly385 the chain is Cytoplasmic. Residues Phe386–Val406 traverse the membrane as a helical segment. At Ser407–Asn956 the chain is on the exoplasmic loop side. Asp454 acts as the 4-aspartylphosphate intermediate in catalysis. ATP contacts are provided by Asp454, Lys455, Thr456, Glu553, Phe594, Lys617, Arg650, Thr730, Gly731, Asp732, Arg865, and Lys871. Asp454 serves as a coordination point for Mg(2+). Thr456 is a binding site for Mg(2+). Residue Asp891 participates in Mg(2+) binding. The ATP site is built by Asn894 and Asp895. Asp895 is a binding site for Mg(2+). Residues Phe957–Val977 traverse the membrane as a helical segment. Residues Tyr978–Asp980 lie on the Cytoplasmic side of the membrane. A helical membrane pass occupies residues Trp981–Leu1001. The Exoplasmic loop portion of the chain corresponds to Asp1002–Ser1034. A helical transmembrane segment spans residues Leu1035–Leu1055. Topologically, residues Thr1056 to Ser1069 are cytoplasmic. A helical transmembrane segment spans residues Phe1070 to Thr1090. Over Ser1091–Tyr1092 the chain is Exoplasmic loop. The chain crosses the membrane as a helical span at residues Trp1093–Phe1113. Residues Asp1114–Ser1117 are Cytoplasmic-facing. The chain crosses the membrane as a helical span at residues Ala1118–Leu1138. At Arg1139–Gln1140 the chain is on the exoplasmic loop side. Residues Pro1141 to Leu1161 form a helical membrane-spanning segment. The Cytoplasmic segment spans residues Arg1162 to Thr1250.

This sequence belongs to the cation transport ATPase (P-type) (TC 3.A.3) family. Type IV subfamily. In terms of assembly, component of a P4-ATPase flippase complex which consists of a catalytic alpha subunit and an accessory beta subunit. The flippase ATP8B1:TMEM30A complex can form an intermediate phosphoenzyme in vitro. Also interacts with beta subunit TMEM30B. Requires Mg(2+) as cofactor.

It localises to the cell membrane. It is found in the apical cell membrane. Its subcellular location is the cell projection. The protein resides in the stereocilium. The protein localises to the endoplasmic reticulum. It localises to the golgi apparatus. The catalysed reaction is ATP + H2O + phospholipidSide 1 = ADP + phosphate + phospholipidSide 2.. The enzyme catalyses a 1,2-diacyl-sn-glycero-3-phospho-L-serine(out) + ATP + H2O = a 1,2-diacyl-sn-glycero-3-phospho-L-serine(in) + ADP + phosphate + H(+). In terms of biological role, catalytic component of a P4-ATPase flippase complex which catalyzes the hydrolysis of ATP coupled to the transport of aminophospholipids from the outer to the inner leaflet of various membranes and ensures the maintenance of asymmetric distribution of phospholipids. Phospholipid translocation also seems to be implicated in vesicle formation and in uptake of lipid signaling molecules. May also participate in the establishment of the canalicular membrane integrity by ensuring asymmetric distribution of phospholipids in the canicular membrane. The chain is Phospholipid-transporting ATPase IC (atp8b1) from Xenopus tropicalis (Western clawed frog).